A 314-amino-acid polypeptide reads, in one-letter code: Coiled-coil domain-containing protein 92 (314 aa).

Coiled coils occupy residues 1 to 27 (MAAT…HAST) and 59 to 113 (DSSS…EKKY). Disordered stretches follow at residues 153–193 (LSSS…KKSL) and 251–314 (ASDR…DRTV). A compositionally biased stretch (basic and acidic residues) spans 176-186 (PPKDKLPETPR). Ser192 carries the phosphoserine modification. Residues 266–280 (KPHKTHVGVAHRIHH) show a composition bias toward basic residues.

Interacts with CEP164. Phosphorylated at Ser-192 by TTBK2.

It is found in the cytoplasm. It localises to the cytoskeleton. The protein resides in the microtubule organizing center. Its subcellular location is the centrosome. The protein localises to the centriole. Functionally, interferon-stimulated protein that plays a role in innate immunity. The protein is Coiled-coil domain-containing protein 92 (Ccdc92) of Mus musculus (Mouse).